The chain runs to 326 residues: Glycerol-3-phosphate dehydrogenase [NAD(P)+] (326 aa).

The NADPH site is built by W13, R33, and K107. Residues K107, G135, and S137 each coordinate sn-glycerol 3-phosphate. A139 provides a ligand contact to NADPH. K190, D243, S253, R254, and N255 together coordinate sn-glycerol 3-phosphate. The active-site Proton acceptor is the K190. R254 serves as a coordination point for NADPH. Residues L273 and E275 each coordinate NADPH.

This sequence belongs to the NAD-dependent glycerol-3-phosphate dehydrogenase family.

Its subcellular location is the cytoplasm. It catalyses the reaction sn-glycerol 3-phosphate + NAD(+) = dihydroxyacetone phosphate + NADH + H(+). The enzyme catalyses sn-glycerol 3-phosphate + NADP(+) = dihydroxyacetone phosphate + NADPH + H(+). Its pathway is membrane lipid metabolism; glycerophospholipid metabolism. In terms of biological role, catalyzes the reduction of the glycolytic intermediate dihydroxyacetone phosphate (DHAP) to sn-glycerol 3-phosphate (G3P), the key precursor for phospholipid synthesis. This chain is Glycerol-3-phosphate dehydrogenase [NAD(P)+], found in Brucella ovis (strain ATCC 25840 / 63/290 / NCTC 10512).